The sequence spans 186 residues: Ribosome-recycling factor (186 aa).

This sequence belongs to the RRF family.

It localises to the cytoplasm. Functionally, responsible for the release of ribosomes from messenger RNA at the termination of protein biosynthesis. May increase the efficiency of translation by recycling ribosomes from one round of translation to another. In Rhizobium leguminosarum bv. trifolii (strain WSM2304), this protein is Ribosome-recycling factor.